Reading from the N-terminus, the 450-residue chain is Crinkler effector protein 63 (450 aa).

The first 17 residues, 1–17, serve as a signal peptide directing secretion; it reads MVKLFCAIVGAAGSAFP. An LQLFLAK domain region spans residues 18 to 55; the sequence is VDIDAGQSAGDLKDAIKAKNPATITCDAKDLQLSLAKT. The segment at 58-117 is DWL domain; the sequence is GAWLPDDDQAALDLEDGKVHEDIQALIDGEKMKATWTIEDVLTANNMTKRKGRAPKSRQI. N103 carries N-linked (GlcNAc...) asparagine glycosylation. Positions 118 to 124 match the HVLVXXP motif motif; that stretch reads HVLVVVP. The segment at 125–450 is effector domain; it reads EGAFGSASET…RSIPTFSYFS (326 aa). Residues 218-224 carry the Nuclear localization signal (NLS) motif; it reads QRKRYRR. N342 carries N-linked (GlcNAc...) asparagine glycosylation.

The protein belongs to the Crinkler effector family. In terms of assembly, forms a homodimer via an inverted association manner. Forms heterodimers with CRN79 and CRN115.

It is found in the secreted. The protein localises to the host nucleus. The protein resides in the host nucleoplasm. Secreted effector that, with CRN115, is critical to pathogenesis by modulating host defenses. Induces cell death in plant host cells. Suppresses callose deposition and affects expression of defense-related genes including two salicylic acid (SA) signal-induced and antimicrobial PR genes (PR1 and PR2), and genes involved in jasmonic acid (JA)/ethylene (ET)-mediated defense pathway (ERF1, ORA59, PDF1.2). CRN115 and CRN63 may share the same molecular host targets that are involved in the cell death signal transduction pathway and that their differential activities are dependent on plant nuclear localization or not. Does not affect MAPK activation and BIK1 phosphorylation and acts downstream of the MAPK cascades in PTI signaling. This chain is Crinkler effector protein 63, found in Phytophthora sojae (strain P6497) (Soybean stem and root rot agent).